The sequence spans 426 residues: Tachykinins (426 aa).

Positions 1–116 (MQCDFRVHQD…IEDNLSHEFE (116 aa)) are excised as a propeptide. Arginine 127 bears the Arginine amide mark. The propeptide occupies 131 to 145 (GYLTPDFEDSYFRDE). Arginine 156 is subject to Arginine amide. Residues 160–167 (VVSDDDYY) constitute a propeptide that is removed on maturation. Arginine 178 is modified (arginine amide). A propeptide spanning residues 182 to 235 (SLEEVLGEIEKKAAMDYYDTRDKKTYVFEYPEDYEKRLLASIRGKLKEFPMEWE) is cleaved from the precursor. Arginine 246 bears the Arginine amide mark. The propeptide occupies 250–259 (SLLDEIEELE). The residue at position 270 (arginine 270) is an Arginine amide. Residues 274–291 (NALENYIDYYLDPDMDFD) constitute a propeptide that is removed on maturation. The tract at residues 299–329 (QGMRGKKDSDKRAPMGFQGMRGKRNTGQRFD) is disordered. Arginine 302 bears the Arginine amide mark. A propeptide spanning residues 306-308 (DSD) is cleaved from the precursor. Arginine amide is present on arginine 319. A propeptide spanning residues 323–358 (NTGQRFDTGINFNIRSSNEYQGTNNRRNALASCQLE) is cleaved from the precursor. Arginine amide occurs at positions 369 and 386. The propeptide occupies 390–426 (WATAPYEDDSPFISVFDNTERIGVDGDSPAILGNSIS).

This sequence belongs to the tachykinin family. As to expression, tachykinins (TK) are expressed throughout the nervous system. APMGFQGMR-amide is also expressed in the retrocerebral complex (at protein level).

It is found in the secreted. Functionally, tachykinins are active peptides which excite neurons, evoke behavioral responses, are potent vasodilators and secretagogues, and contract (directly or indirectly) many smooth muscles. This is Tachykinins from Camponotus floridanus (Florida carpenter ant).